The sequence spans 493 residues: Glutamyl-tRNA(Gln) amidotransferase subunit A (493 aa).

Catalysis depends on charge relay system residues Lys79 and Ser159. Residue Ser183 is the Acyl-ester intermediate of the active site.

This sequence belongs to the amidase family. GatA subfamily. Heterotrimer of A, B and C subunits.

It carries out the reaction L-glutamyl-tRNA(Gln) + L-glutamine + ATP + H2O = L-glutaminyl-tRNA(Gln) + L-glutamate + ADP + phosphate + H(+). Allows the formation of correctly charged Gln-tRNA(Gln) through the transamidation of misacylated Glu-tRNA(Gln) in organisms which lack glutaminyl-tRNA synthetase. The reaction takes place in the presence of glutamine and ATP through an activated gamma-phospho-Glu-tRNA(Gln). The protein is Glutamyl-tRNA(Gln) amidotransferase subunit A of Brucella suis biovar 1 (strain 1330).